Here is a 531-residue protein sequence, read N- to C-terminus: DnaJ homolog subfamily C member 21 (531 aa).

The 67-residue stretch at 3 to 69 (CHYEALGVRR…QERAWYDNHR (67 aa)) folds into the J domain. 3 disordered regions span residues 279 to 311 (FGDGSDENEMEEHELKDEEDGKDSDEAEDAELY), 327 to 474 (KAMK…VPAE), and 502 to 531 (KATGHARAPSSSSLNSATSSQSKKEKRKNR). Residues 281–311 (DGSDENEMEEHELKDEEDGKDSDEAEDAELY) show a composition bias toward acidic residues. 2 positions are modified to phosphoserine: serine 283 and serine 302. The C2H2-type 1 zinc-finger motif lies at 314-338 (LYCPACDKSFKTEKAMKNHEKSKKH). Positions 364–375 (NPLDDNSEEEME) are enriched in acidic residues. Serine 370 carries the post-translational modification Phosphoserine. Over residues 381–392 (KLSKKQKKKKQK) the composition is skewed to basic residues. Residues 393-403 (PAQNYDDNFNV) are compositionally biased toward polar residues. Positions 442–453 (KPCDDPKSEAKS) are enriched in basic and acidic residues. Residues 455–464 (PKPKGKKTKD) show a composition bias toward basic residues. Residues 482–506 (ISCTTCHSEFPSRNKLFDHLKATGH) form a C2H2-type 2 zinc finger. Residue serine 511 is modified to Phosphoserine. The segment covering 511-522 (SSSSLNSATSSQ) has biased composition (low complexity).

Interacts with HSPA8, PA2G4 and ZNF622. In terms of tissue distribution, expressed in brain, placenta, kidney and pancreas.

It localises to the cytoplasm. The protein localises to the nucleus. Its subcellular location is the nucleolus. In terms of biological role, may act as a co-chaperone for HSP70. May play a role in ribosomal RNA (rRNA) biogenesis, possibly in the maturation of the 60S subunit. Binds the precursor 45S rRNA. This Homo sapiens (Human) protein is DnaJ homolog subfamily C member 21 (DNAJC21).